A 199-amino-acid polypeptide reads, in one-letter code: Cytochrome c oxidase subunit 2 (199 aa).

The helical transmembrane segment at 1–13 (AICSLVLYLLSLM) threads the bilayer. Topologically, residues 14 to 26 (LMEKLSSNTVDAQ) are mitochondrial matrix. Residues 27–54 (EVELIWTILPAIVLILLALPSLQILYMM) traverse the membrane as a helical segment. The Mitochondrial intermembrane segment spans residues 55 to 199 (DEIDEPDLTL…SSLLSSSSSL (145 aa)). Positions 128, 163, 165, 167, 171, and 174 each coordinate Cu cation. Residue Glu-165 coordinates Mg(2+).

The protein belongs to the cytochrome c oxidase subunit 2 family. Component of the cytochrome c oxidase (complex IV, CIV), a multisubunit enzyme composed of 14 subunits. The complex is composed of a catalytic core of 3 subunits MT-CO1, MT-CO2 and MT-CO3, encoded in the mitochondrial DNA, and 11 supernumerary subunits COX4I, COX5A, COX5B, COX6A, COX6B, COX6C, COX7A, COX7B, COX7C, COX8 and NDUFA4, which are encoded in the nuclear genome. The complex exists as a monomer or a dimer and forms supercomplexes (SCs) in the inner mitochondrial membrane with NADH-ubiquinone oxidoreductase (complex I, CI) and ubiquinol-cytochrome c oxidoreductase (cytochrome b-c1 complex, complex III, CIII), resulting in different assemblies (supercomplex SCI(1)III(2)IV(1) and megacomplex MCI(2)III(2)IV(2)). Found in a complex with TMEM177, COA6, COX18, COX20, SCO1 and SCO2. Interacts with TMEM177 in a COX20-dependent manner. Interacts with COX20. Interacts with COX16. The cofactor is Cu cation.

The protein localises to the mitochondrion inner membrane. It catalyses the reaction 4 Fe(II)-[cytochrome c] + O2 + 8 H(+)(in) = 4 Fe(III)-[cytochrome c] + 2 H2O + 4 H(+)(out). In terms of biological role, component of the cytochrome c oxidase, the last enzyme in the mitochondrial electron transport chain which drives oxidative phosphorylation. The respiratory chain contains 3 multisubunit complexes succinate dehydrogenase (complex II, CII), ubiquinol-cytochrome c oxidoreductase (cytochrome b-c1 complex, complex III, CIII) and cytochrome c oxidase (complex IV, CIV), that cooperate to transfer electrons derived from NADH and succinate to molecular oxygen, creating an electrochemical gradient over the inner membrane that drives transmembrane transport and the ATP synthase. Cytochrome c oxidase is the component of the respiratory chain that catalyzes the reduction of oxygen to water. Electrons originating from reduced cytochrome c in the intermembrane space (IMS) are transferred via the dinuclear copper A center (CU(A)) of subunit 2 and heme A of subunit 1 to the active site in subunit 1, a binuclear center (BNC) formed by heme A3 and copper B (CU(B)). The BNC reduces molecular oxygen to 2 water molecules using 4 electrons from cytochrome c in the IMS and 4 protons from the mitochondrial matrix. This chain is Cytochrome c oxidase subunit 2 (MT-CO2), found in Rhea americana (Greater rhea).